Here is a 328-residue protein sequence, read N- to C-terminus: Cytochrome c biogenesis protein CcsA (328 aa).

A run of 8 helical transmembrane segments spans residues 13-33 (ISFS…LVNL), 46-66 (GIII…IYSG), 73-93 (LYES…VSYF), 101-121 (LNAI…SGLL), 146-166 (MILG…LLVI), 234-254 (IISL…VWAN), 263-283 (WDPK…YLHI), and 295-315 (AIVA…VILL).

This sequence belongs to the CcmF/CycK/Ccl1/NrfE/CcsA family. In terms of assembly, may interact with Ccs1.

Its subcellular location is the plastid. It localises to the chloroplast thylakoid membrane. Functionally, required during biogenesis of c-type cytochromes (cytochrome c6 and cytochrome f) at the step of heme attachment. The chain is Cytochrome c biogenesis protein CcsA from Crucihimalaya wallichii (Rock-cress).